Here is a 417-residue protein sequence, read N- to C-terminus: Gamma-glutamyl phosphate reductase (417 aa).

It belongs to the gamma-glutamyl phosphate reductase family.

The protein resides in the cytoplasm. The enzyme catalyses L-glutamate 5-semialdehyde + phosphate + NADP(+) = L-glutamyl 5-phosphate + NADPH + H(+). Its pathway is amino-acid biosynthesis; L-proline biosynthesis; L-glutamate 5-semialdehyde from L-glutamate: step 2/2. Functionally, catalyzes the NADPH-dependent reduction of L-glutamate 5-phosphate into L-glutamate 5-semialdehyde and phosphate. The product spontaneously undergoes cyclization to form 1-pyrroline-5-carboxylate. The protein is Gamma-glutamyl phosphate reductase of Escherichia coli O8 (strain IAI1).